A 274-amino-acid chain; its full sequence is Penicillin-insensitive murein endopeptidase (274 aa).

A signal peptide spans 1-19 (MKKTAIALLAWFVSSASLA). 3 disulfide bridges follow: cysteine 44-cysteine 265, cysteine 187-cysteine 235, and cysteine 216-cysteine 223. The Zn(2+) site is built by histidine 110, histidine 113, aspartate 120, aspartate 147, histidine 150, and histidine 211. Residues 225–274 (DQPLPPPGDGCGAELQSWFEPPKPGTTKPEKKTPPPLPPSCQALLDEHVL) form a disordered region.

The protein belongs to the peptidase M74 family. As to quaternary structure, dimer. Zn(2+) is required as a cofactor.

It is found in the periplasm. Its function is as follows. Murein endopeptidase that cleaves the D-alanyl-meso-2,6-diamino-pimelyl amide bond that connects peptidoglycan strands. Likely plays a role in the removal of murein from the sacculus. The protein is Penicillin-insensitive murein endopeptidase of Salmonella paratyphi A (strain AKU_12601).